The primary structure comprises 314 residues: Ribonuclease Z (314 aa).

Residues His-61, His-63, Asp-65, His-66, His-137, Asp-207, and His-263 each contribute to the Zn(2+) site. The Proton acceptor role is filled by Asp-65.

The protein belongs to the RNase Z family. As to quaternary structure, homodimer. It depends on Zn(2+) as a cofactor.

The catalysed reaction is Endonucleolytic cleavage of RNA, removing extra 3' nucleotides from tRNA precursor, generating 3' termini of tRNAs. A 3'-hydroxy group is left at the tRNA terminus and a 5'-phosphoryl group is left at the trailer molecule.. Zinc phosphodiesterase, which displays some tRNA 3'-processing endonuclease activity. Probably involved in tRNA maturation, by removing a 3'-trailer from precursor tRNA. The protein is Ribonuclease Z of Thermococcus kodakarensis (strain ATCC BAA-918 / JCM 12380 / KOD1) (Pyrococcus kodakaraensis (strain KOD1)).